Consider the following 526-residue polypeptide: Adenylosuccinate synthetase (526 aa).

Residues 102–108 and 130–132 each bind GTP; these read GDEGKGK and GHT. Aspartate 103 functions as the Proton acceptor in the catalytic mechanism. Positions 103 and 130 each coordinate Mg(2+). IMP contacts are provided by residues 103–106, 128–131, threonine 219, arginine 233, asparagine 310, threonine 325, and arginine 392; these read DEGK and NAGH. Histidine 131 acts as the Proton donor in catalysis. Substrate is bound at residue 388 to 394; sequence TTTGRTR. Residues arginine 394, 420 to 422, and 502 to 504 each bind GTP; these read KVD and GVG.

Belongs to the adenylosuccinate synthetase family. As to quaternary structure, homodimer. It depends on Mg(2+) as a cofactor.

The protein resides in the cytoplasm. It catalyses the reaction IMP + L-aspartate + GTP = N(6)-(1,2-dicarboxyethyl)-AMP + GDP + phosphate + 2 H(+). It functions in the pathway purine metabolism; AMP biosynthesis via de novo pathway; AMP from IMP: step 1/2. In terms of biological role, plays an important role in the de novo pathway and in the salvage pathway of purine nucleotide biosynthesis. Catalyzes the first committed step in the biosynthesis of AMP from IMP. The chain is Adenylosuccinate synthetase from Phaeodactylum tricornutum (strain CCAP 1055/1).